The following is a 351-amino-acid chain: MKQRTWPCRSEGSRFSSLSFLKPHDKDKRSRISSINKATAKSTTSSRSSSSSSSSRPPSNEFGDFSMLPYDILMKIAAPFSHPNLQAASLVCKSWRDALKPLRESMLLIRWGKKYKHGRGGVRANLDKALDSFLKGAMRGSTLAMVDAGLVYWERGEKEKAVNLYRRASELGDAVGQCNLGIAYLQVQPSNPKEAMKWLKQSAENGYVRAQYQLALCLHHGRVVQTNLLEATKWYLKAAEGGYVRAMYNISLCYSVGEGLPQNRKLARKWMKRAADHGHSKAQFEHGLALFSEGEMLKSVLYLELAERGGEAAATPVKEVVHQQLSATFGGQAVHHAIHQANNWRPLPVTR.

The interval 1 to 60 is disordered; it reads MKQRTWPCRSEGSRFSSLSFLKPHDKDKRSRISSINKATAKSTTSSRSSSSSSSSRPPSN. Over residues 32–41 the composition is skewed to polar residues; sequence ISSINKATAK. Positions 42 to 59 are enriched in low complexity; sequence STTSSRSSSSSSSSRPPS. The 50-residue stretch at 62-111 folds into the F-box domain; that stretch reads FGDFSMLPYDILMKIAAPFSHPNLQAASLVCKSWRDALKPLRESMLLIRW. Residues 105–141 form a Sel1-like repeat; the sequence is SMLLIRWGKKYKHGRGGVRANLDKALDSFLKGAMRGS. Residues 142-175 form a TPR repeat; that stretch reads TLAMVDAGLVYWERGEKEKAVNLYRRASELGDAV.

The chain is F-box protein At1g70590 from Arabidopsis thaliana (Mouse-ear cress).